Reading from the N-terminus, the 104-residue chain is Inclusion membrane protein F (104 aa).

2 helical membrane passes run 39–59 and 70–90; these read LVVALAALVLNGALCVLSLVA and LAVLVATTLASFLCVAYVLFI.

It localises to the secreted. It is found in the host vacuole. The protein resides in the host pathogen-containing vacuole. Its subcellular location is the host pathogen-containing vacuole membrane. In terms of biological role, inclusion membrane protein probably involved in early modification events of the chlamydial inclusion. The polypeptide is Inclusion membrane protein F (Chlamydia trachomatis serovar L2 (strain ATCC VR-902B / DSM 19102 / 434/Bu)).